Here is a 118-residue protein sequence, read N- to C-terminus: NADPH-dependent 7-cyano-7-deazaguanine reductase (118 aa).

C31 functions as the Thioimide intermediate in the catalytic mechanism. D38 acts as the Proton donor in catalysis. Residues 53 to 55 (IEL) and 72 to 73 (YE) each bind substrate.

It belongs to the GTP cyclohydrolase I family. QueF type 1 subfamily.

It is found in the cytoplasm. It carries out the reaction 7-aminomethyl-7-carbaguanine + 2 NADP(+) = 7-cyano-7-deazaguanine + 2 NADPH + 3 H(+). It functions in the pathway tRNA modification; tRNA-queuosine biosynthesis. Its function is as follows. Catalyzes the NADPH-dependent reduction of 7-cyano-7-deazaguanine (preQ0) to 7-aminomethyl-7-deazaguanine (preQ1). The protein is NADPH-dependent 7-cyano-7-deazaguanine reductase of Prosthecochloris aestuarii (strain DSM 271 / SK 413).